The primary structure comprises 352 residues: Putative histone-lysine N-methyltransferase ASHH4 (352 aa).

The AWS domain maps to 60-109 (DHGIFCSCSLDPGSSTLCGSDCNCGILLSSCSSSCKCSSECTNKPFQQRH). An SET domain is found at 111–228 (KKMKLVQTEK…KGEQLTYDYQ (118 aa)). The 17-residue stretch at 234 to 250 (ADQDCYCGAVCCRKKLG) folds into the Post-SET domain.

This sequence belongs to the class V-like SAM-binding methyltransferase superfamily. Histone-lysine methyltransferase family. SET2 subfamily.

It localises to the nucleus. It is found in the chromosome. Its subcellular location is the centromere. The enzyme catalyses L-lysyl-[histone] + S-adenosyl-L-methionine = N(6)-methyl-L-lysyl-[histone] + S-adenosyl-L-homocysteine + H(+). Functionally, histone methyltransferase. The protein is Putative histone-lysine N-methyltransferase ASHH4 (ASHH4) of Arabidopsis thaliana (Mouse-ear cress).